The following is a 229-amino-acid chain: Apoptosis regulator Bcl-2 (229 aa).

The BH4 motif lies at 10-30 (DNREIVMKYIHYKLSQRGYEW). Residues 30–82 (WDAGDAGAAPPGAAPAPGILSSQPGRTPAPSRTSPPPPPAAAAGPAPSPVPPV) are disordered. Residues 33-61 (GDAGAAPPGAAPAPGILSSQPGRTPAPSR) are compositionally biased toward low complexity. Phosphothreonine; by MAPK8 is present on Thr-62. Over residues 62–81 (TSPPPPPAAAAGPAPSPVPP) the composition is skewed to pro residues. Ser-63 is subject to Phosphoserine; by MAPK8 and PKC. Ser-77 carries the phosphoserine; by MAPK8 modification. A BH3 motif is present at residues 83–97 (VHLTLRQAGDDFSRR). A BH1 motif is present at residues 126 to 145 (ELFRDGVNWGRIVAFFEFGG). Positions 177-192 (TWIQDNGGWDAFVELY) match the BH2 motif. A helical transmembrane segment spans residues 202 to 223 (FSWLSLKALLSLALVGACITLG).

Belongs to the Bcl-2 family. Forms homodimers, and heterodimers with BAX, BAD, BAK and Bcl-X(L). Heterodimerization with BAX requires intact BH1 and BH2 motifs, and is necessary for anti-apoptotic activity. Component of the complex, at least composed of LRPPRC, BECN1 and BCL2; the interactions prevent BECN1 from forming an autophagy-inducing complex with PIK3C3. Interacts with EI24. Also interacts with APAF1, BBC3, BCL2L1, BNIPL, MRPL41 and TP53BP2. Binding to FKBP8 seems to target BCL2 to the mitochondria and probably interferes with the binding of BCL2 to its targets. Interacts with BAG1 in an ATP-dependent manner. Interacts with RAF1 (the 'Ser-338' and 'Ser-339' phosphorylated form). Interacts (via the BH4 domain) with EGLN3; the interaction prevents the formation of the BAX-BCL2 complex and inhibits the anti-apoptotic activity of BCL2. Interacts with G0S2; this interaction also prevents the formation of the anti-apoptotic BAX-BCL2 complex. Interacts with RTL10/BOP. Interacts with the SCF(FBXO10) complex. Interacts (via the loop between motifs BH4 and BH3) with NLRP1 (via LRR repeats), but not with NLRP2, NLRP3, NLRP4, PYCARD, nor MEFV. Interacts with GIMAP3/IAN4, GIMAP4/IAN1 and GIMAP5/IAN5. Interacts with BCAP31. Interacts with IRF3; the interaction is inhibited by Sendai virus infection. Interacts with BECN1; thereby inhibiting autophagy in non-starvation conditions. Interacts with AMBRA1; thereby inhibiting autophagy. Post-translationally, phosphorylation/dephosphorylation on Ser-63 regulates anti-apoptotic activity. Growth factor-stimulated phosphorylation on Ser-63 by PKC is required for the anti-apoptosis activity and occurs during the G2/M phase of the cell cycle. In the absence of growth factors, BCL2 appears to be phosphorylated by other protein kinases such as ERKs and stress-activated kinases. Phosphorylated by MAPK8/JNK1 at Thr-62, Ser-63 and Ser-77, which stimulates starvation-induced autophagy. Dephosphorylated by protein phosphatase 2A (PP2A). In terms of processing, proteolytically cleaved by caspases during apoptosis. The cleaved protein, lacking the BH4 motif, has pro-apoptotic activity, causes the release of cytochrome c into the cytosol promoting further caspase activity. Monoubiquitinated by PRKN, leading to an increase in its stability. Ubiquitinated by SCF(FBXO10), leading to its degradation by the proteasome.

The protein localises to the mitochondrion outer membrane. The protein resides in the nucleus membrane. It is found in the endoplasmic reticulum membrane. Its subcellular location is the cytoplasm. Functionally, suppresses apoptosis in a variety of cell systems including factor-dependent lymphohematopoietic and neural cells. Regulates cell death by controlling the mitochondrial membrane permeability. Appears to function in a feedback loop system with caspases. Inhibits caspase activity either by preventing the release of cytochrome c from the mitochondria and/or by binding to the apoptosis-activating factor (APAF-1). Also acts as an inhibitor of autophagy: interacts with BECN1 and AMBRA1 during non-starvation conditions and inhibits their autophagy function. May attenuate inflammation by impairing NLRP1-inflammasome activation, hence CASP1 activation and IL1B release. The sequence is that of Apoptosis regulator Bcl-2 (BCL2) from Bos taurus (Bovine).